The primary structure comprises 262 residues: Putative hydro-lyase RHA1_ro03475 (262 aa).

Belongs to the D-glutamate cyclase family.

The sequence is that of Putative hydro-lyase RHA1_ro03475 from Rhodococcus jostii (strain RHA1).